The following is a 72-amino-acid chain: Translation initiation factor IF-1 (72 aa).

One can recognise an S1-like domain in the interval 1–72 (MSNDDSIEFE…TKGRITYRMK (72 aa)).

This sequence belongs to the IF-1 family. As to quaternary structure, component of the 30S ribosomal translation pre-initiation complex which assembles on the 30S ribosome in the order IF-2 and IF-3, IF-1 and N-formylmethionyl-tRNA(fMet); mRNA recruitment can occur at any time during PIC assembly.

The protein localises to the cytoplasm. Functionally, one of the essential components for the initiation of protein synthesis. Stabilizes the binding of IF-2 and IF-3 on the 30S subunit to which N-formylmethionyl-tRNA(fMet) subsequently binds. Helps modulate mRNA selection, yielding the 30S pre-initiation complex (PIC). Upon addition of the 50S ribosomal subunit IF-1, IF-2 and IF-3 are released leaving the mature 70S translation initiation complex. This Xanthomonas campestris pv. campestris (strain B100) protein is Translation initiation factor IF-1.